A 670-amino-acid polypeptide reads, in one-letter code: DNA ligase (670 aa).

Residues 34–38 (DAEYD), 83–84 (SL), and Glu-112 each bind NAD(+). Lys-114 acts as the N6-AMP-lysine intermediate in catalysis. NAD(+) is bound by residues Arg-135, Glu-169, Lys-285, and Lys-309. Cys-403, Cys-406, Cys-421, and Cys-426 together coordinate Zn(2+). Residues 589–670 (PASSVLAGKT…FLQEISREEQ (82 aa)) enclose the BRCT domain.

Belongs to the NAD-dependent DNA ligase family. LigA subfamily. The cofactor is Mg(2+). Mn(2+) is required as a cofactor.

The enzyme catalyses NAD(+) + (deoxyribonucleotide)n-3'-hydroxyl + 5'-phospho-(deoxyribonucleotide)m = (deoxyribonucleotide)n+m + AMP + beta-nicotinamide D-nucleotide.. DNA ligase that catalyzes the formation of phosphodiester linkages between 5'-phosphoryl and 3'-hydroxyl groups in double-stranded DNA using NAD as a coenzyme and as the energy source for the reaction. It is essential for DNA replication and repair of damaged DNA. This chain is DNA ligase, found in Geobacillus thermodenitrificans (strain NG80-2).